A 156-amino-acid chain; its full sequence is Small ribosomal subunit protein uS7 (156 aa).

This sequence belongs to the universal ribosomal protein uS7 family. Part of the 30S ribosomal subunit. Contacts proteins S9 and S11.

One of the primary rRNA binding proteins, it binds directly to 16S rRNA where it nucleates assembly of the head domain of the 30S subunit. Is located at the subunit interface close to the decoding center, probably blocks exit of the E-site tRNA. The chain is Small ribosomal subunit protein uS7 from Rhodopseudomonas palustris (strain BisA53).